We begin with the raw amino-acid sequence, 290 residues long: 33 kDa chaperonin (290 aa).

2 disulfides stabilise this stretch: cysteine 235–cysteine 237 and cysteine 268–cysteine 271.

The protein belongs to the HSP33 family. In terms of processing, under oxidizing conditions two disulfide bonds are formed involving the reactive cysteines. Under reducing conditions zinc is bound to the reactive cysteines and the protein is inactive.

It localises to the cytoplasm. Functionally, redox regulated molecular chaperone. Protects both thermally unfolding and oxidatively damaged proteins from irreversible aggregation. Plays an important role in the bacterial defense system toward oxidative stress. The chain is 33 kDa chaperonin from Streptococcus uberis (strain ATCC BAA-854 / 0140J).